The primary structure comprises 1241 residues: ATP-dependent helicase/nuclease subunit A (1241 aa).

Residues 12–485 (SQWTDDQWKA…IDLAKNFRSR (474 aa)) enclose the UvrD-like helicase ATP-binding domain. 33-40 (AAAGSGKT) contributes to the ATP binding site. Residues 505 to 805 (GEIDYDADAE…RIMTIHKSKG (301 aa)) enclose the UvrD-like helicase C-terminal domain.

Belongs to the helicase family. AddA subfamily. In terms of assembly, heterodimer of AddA and AddB/RexB. Requires Mg(2+) as cofactor.

The enzyme catalyses Couples ATP hydrolysis with the unwinding of duplex DNA by translocating in the 3'-5' direction.. It carries out the reaction ATP + H2O = ADP + phosphate + H(+). The heterodimer acts as both an ATP-dependent DNA helicase and an ATP-dependent, dual-direction single-stranded exonuclease. Recognizes the chi site generating a DNA molecule suitable for the initiation of homologous recombination. The AddA nuclease domain is required for chi fragment generation; this subunit has the helicase and 3' -&gt; 5' nuclease activities. This Bacillus mycoides (strain KBAB4) (Bacillus weihenstephanensis) protein is ATP-dependent helicase/nuclease subunit A.